A 237-amino-acid polypeptide reads, in one-letter code: UPF0502 protein HEAR1280 (237 aa).

The segment covering 1–13 (MNTEVMHSTSTES) has biased composition (polar residues). Residues 1-21 (MNTEVMHSTSTESDAQEKPQA) are disordered.

This sequence belongs to the UPF0502 family.

In Herminiimonas arsenicoxydans, this protein is UPF0502 protein HEAR1280.